The primary structure comprises 725 residues: MDKMKKPKINWLLIVIVGIIAALLITVLVLLFSPKTQPKSFDYLLKHFEEAAKSTTDDIYFETIKINSLDNTIGVIFRNGAMREEYFVAASAAQANFLTSGNVEVREILQLANVQAYIQSIKTLNGTISWFTFMNKFLAQHPGYDASKAGLFGQHIVQENGFITFIKAIWFPALIAIIIFLGYKAQSRAASGGIFNPGKNQAVIVKTDKKFTDIAGNKEPIEEVQELVDYLKNPKKYAAAGARFPKGILLGGPPGTGKTLLAKATAGEANVPFFFISASSFVELYVGLGAKRVREMFKEARKLAPAIIFIDELDAVGRSRGSGIGGGNDEREQTLNQILVEMDGINENAGILIMGATNRTDVLDPALLRPGRFDRIITVGLPDIKEREEILKLHSKGKRLSKEIKFDKIAKRTPGYSGAQLENVINEASLLSVREKTDVIISTQIDEAIDRVMAGPAKKSRVISQEELKAVAYHEAGHAVVGLKVKGGNKVQKITIIPRGNAGGYNLMTPEEEKYNASKKELLATIASYMGGRAAEMIIYGKENISTGASDDISRATKIARKMVTEWGMSALGPIKYEEDTENPFLGRDYSKGTFGSKMAHEIDLEIRKIISASEEIAIKAIEQNLELLELIKDSLLENETIVAEEIEYIEKNMKLPPNNEKIKPDGESKKVNIEDLINQVNESQEKDKQKNAQIKEDLSKMDKKDNLTKAKDKGEEETLAEKAE.

The Cytoplasmic segment spans residues 1 to 11 (MDKMKKPKINW). Residues 12–32 (LLIVIVGIIAALLITVLVLLF) form a helical membrane-spanning segment. Residues 33-160 (SPKTQPKSFD…LFGQHIVQEN (128 aa)) are Extracellular-facing. A helical membrane pass occupies residues 161 to 181 (GFITFIKAIWFPALIAIIIFL). Residues 182–725 (GYKAQSRAAS…EEETLAEKAE (544 aa)) lie on the Cytoplasmic side of the membrane. An ATP-binding site is contributed by 252–259 (GPPGTGKT). His-474 provides a ligand contact to Zn(2+). Glu-475 is a catalytic residue. Positions 478 and 552 each coordinate Zn(2+). Residues 680-725 (QVNESQEKDKQKNAQIKEDLSKMDKKDNLTKAKDKGEEETLAEKAE) are disordered. The span at 684 to 725 (SQEKDKQKNAQIKEDLSKMDKKDNLTKAKDKGEEETLAEKAE) shows a compositional bias: basic and acidic residues.

It in the central section; belongs to the AAA ATPase family. The protein in the C-terminal section; belongs to the peptidase M41 family. As to quaternary structure, homohexamer. The cofactor is Zn(2+).

It is found in the cell membrane. Acts as a processive, ATP-dependent zinc metallopeptidase for both cytoplasmic and membrane proteins. Plays a role in the quality control of integral membrane proteins. This chain is ATP-dependent zinc metalloprotease FtsH, found in Mycoplasmopsis pulmonis (strain UAB CTIP) (Mycoplasma pulmonis).